The following is a 381-amino-acid chain: MLLSIGMLMLSATQVYTILTVQLFAFLNLLPVEADILAYNFENASQTFDDLPARFGYRLPAEGLKGFLINSKPENACEPIVPPPVKDNSSGTFIVLIRRLDCNFDIKVLNAQRAGYKAAIVHNVDSDDLISMGSNDIEVLKKIDIPSVFIGESSANSLKDEFTYEKGGHLILVPEFSLPLEYYLIPFLIIVGICLILIVIFMITKFVQDRHRARRNRLRKDQLKKLPVHKFKKGDEYDVCAICLDEYEDGDKLRILPCSHAYHCKCVDPWLTKTKKTCPVCKQKVVPSQGDSDSDTDSSQEENEVTEHTPLLRPLASVSAQSFGALSESRSHQNMTESSDYEEDDNEDTDSSDAENEINEHDVVVQLQPNGERDYNIANTV.

Positions 1–34 are cleaved as a signal peptide; the sequence is MLLSIGMLMLSATQVYTILTVQLFAFLNLLPVEA. The Lumenal segment spans residues 35-182; the sequence is DILAYNFENA…VPEFSLPLEY (148 aa). One can recognise a PA domain in the interval 65-160; the sequence is KGFLINSKPE…GESSANSLKD (96 aa). An N-linked (GlcNAc...) asparagine glycan is attached at N88. The chain crosses the membrane as a helical span at residues 183-203; the sequence is YLIPFLIIVGICLILIVIFMI. Residues 204-381 lie on the Cytoplasmic side of the membrane; it reads TKFVQDRHRA…ERDYNIANTV (178 aa). The RING-type; atypical zinc-finger motif lies at 240 to 282; the sequence is CAICLDEYEDGDKLRILPCSHAYHCKCVDPWLTKTKKTCPVCK. A disordered region spans residues 285-381; that stretch reads VVPSQGDSDS…ERDYNIANTV (97 aa). Composition is skewed to acidic residues over residues 292–304 and 339–357; these read SDSD…EENE and SDYE…AENE.

As to quaternary structure, interacts with ERN1. Autoubiquitinated. As to expression, widely expressed (at protein level). In normal pancreas, expressed in islets, but not in ducts, nor in acini (at protein level).

It is found in the endoplasmic reticulum membrane. It localises to the late endosome membrane. The protein resides in the lysosome membrane. Its subcellular location is the nucleus inner membrane. The enzyme catalyses S-ubiquitinyl-[E2 ubiquitin-conjugating enzyme]-L-cysteine + [acceptor protein]-L-lysine = [E2 ubiquitin-conjugating enzyme]-L-cysteine + N(6)-ubiquitinyl-[acceptor protein]-L-lysine.. It functions in the pathway protein modification; protein ubiquitination. Functionally, E3 ubiquitin-protein ligase that regulates cell proliferation. Involved in apoptosis regulation. Mediates ER stress-induced activation of JNK signaling pathway and apoptosis by promoting ERN1 activation and splicing of XBP1 mRNA. Also involved in protein trafficking and localization. The chain is E3 ubiquitin-protein ligase RNF13 from Homo sapiens (Human).